The primary structure comprises 196 residues: uncharacterized protein (196 aa).

One can recognise an HD domain in the interval 51 to 164 (VAEHSLLVEE…DRIFGKPDPV (114 aa)).

This is an uncharacterized protein from Rhodobacter capsulatus (strain ATCC BAA-309 / NBRC 16581 / SB1003).